Reading from the N-terminus, the 244-residue chain is AA9 family lytic polysaccharide monooxygenase B (244 aa).

The N-terminal stretch at Met-1–Ala-19 is a signal peptide. Cu(2+) is bound at residue His-20. Tyr-39 serves as a coordination point for (1,4-beta-D-glucosyl)n. Cystine bridges form between Cys-68–Cys-189 and Cys-111–Cys-115. His-99 contributes to the Cu(2+) binding site. N-linked (GlcNAc...) asparagine glycosylation occurs at Asn-152. Residues His-178 and Gln-184 each contribute to the O2 site. Position 186 (Tyr-186) interacts with Cu(2+). Residues Asp-224, Tyr-226, and Glu-229 each coordinate (1,4-beta-D-glucosyl)n. An N-linked (GlcNAc...) asparagine glycan is attached at Asn-233.

This sequence belongs to the polysaccharide monooxygenase AA9 family. Cu(2+) is required as a cofactor.

Its subcellular location is the secreted. It catalyses the reaction [(1-&gt;4)-beta-D-glucosyl]n+m + reduced acceptor + O2 = 4-dehydro-beta-D-glucosyl-[(1-&gt;4)-beta-D-glucosyl]n-1 + [(1-&gt;4)-beta-D-glucosyl]m + acceptor + H2O.. In terms of biological role, lytic polysaccharide monooxygenase (LPMO) that depolymerizes crystalline and amorphous polysaccharides via the oxidation of scissile alpha- or beta-(1-4)-glycosidic bonds, yielding specifically C1 oxidation product. Catalysis by LPMOs requires the reduction of the active-site copper from Cu(II) to Cu(I) by a reducing agent and H(2)O(2) or O(2) as a cosubstrate. Displays catalytic activity on insoluble cellulose using I-beta microfibril model substrate. The polypeptide is AA9 family lytic polysaccharide monooxygenase B (Heterobasidion irregulare (strain TC 32-1)).